Here is a 417-residue protein sequence, read N- to C-terminus: Serine hydroxymethyltransferase (417 aa).

Residues leucine 121 and 125–127 (GHL) each bind (6S)-5,6,7,8-tetrahydrofolate. Lysine 229 is subject to N6-(pyridoxal phosphate)lysine. 355–357 (SPF) is a (6S)-5,6,7,8-tetrahydrofolate binding site.

This sequence belongs to the SHMT family. Homodimer. It depends on pyridoxal 5'-phosphate as a cofactor.

The protein resides in the cytoplasm. The enzyme catalyses (6R)-5,10-methylene-5,6,7,8-tetrahydrofolate + glycine + H2O = (6S)-5,6,7,8-tetrahydrofolate + L-serine. Its pathway is one-carbon metabolism; tetrahydrofolate interconversion. It functions in the pathway amino-acid biosynthesis; glycine biosynthesis; glycine from L-serine: step 1/1. Functionally, catalyzes the reversible interconversion of serine and glycine with tetrahydrofolate (THF) serving as the one-carbon carrier. This reaction serves as the major source of one-carbon groups required for the biosynthesis of purines, thymidylate, methionine, and other important biomolecules. Also exhibits THF-independent aldolase activity toward beta-hydroxyamino acids, producing glycine and aldehydes, via a retro-aldol mechanism. The sequence is that of Serine hydroxymethyltransferase from Xylella fastidiosa (strain M12).